A 245-amino-acid chain; its full sequence is Eukaryotic translation initiation factor 3 subunit K (245 aa).

The PCI domain maps to 46 to 227 (YDCYANLALL…EAKGTVVREN (182 aa)).

The protein belongs to the eIF-3 subunit K family. In terms of assembly, component of the eukaryotic translation initiation factor 3 (eIF-3) complex.

It is found in the cytoplasm. Functionally, component of the eukaryotic translation initiation factor 3 (eIF-3) complex, which is involved in protein synthesis of a specialized repertoire of mRNAs and, together with other initiation factors, stimulates binding of mRNA and methionyl-tRNAi to the 40S ribosome. The eIF-3 complex specifically targets and initiates translation of a subset of mRNAs involved in cell proliferation. This is Eukaryotic translation initiation factor 3 subunit K from Sclerotinia sclerotiorum (strain ATCC 18683 / 1980 / Ss-1) (White mold).